Reading from the N-terminus, the 110-residue chain is Cell division protein FtsB (110 aa).

At 1-3 (MRL) the chain is on the cytoplasmic side. Residues 4–21 (IILCLAALVLLIQFPLWL) traverse the membrane as a helical segment. The Periplasmic segment spans residues 22–110 (GKGGWLRVWD…PPKIEPKEKR (89 aa)). Residues 31–64 (DLDQQVIAAQKKNDELRARNAKLNSEVQDLKEGT) adopt a coiled-coil conformation.

This sequence belongs to the FtsB family. As to quaternary structure, part of a complex composed of FtsB, FtsL and FtsQ.

It is found in the cell inner membrane. Functionally, essential cell division protein. May link together the upstream cell division proteins, which are predominantly cytoplasmic, with the downstream cell division proteins, which are predominantly periplasmic. The sequence is that of Cell division protein FtsB from Herminiimonas arsenicoxydans.